Here is a 714-residue protein sequence, read N- to C-terminus: MISKSKTAAPDIDKLTKPKAKVELMRLRLAIEGHDKAYYQDDAPKIPDADYDALRRRLEAIEAKFPELLSASSPSQTVGAAPARGFSKVQHAVPMLSLGNAFSDDEVGEFVERVQRFLKLEDIPAIVAEPKIDGLSLSLRYENGTLVRAATRGDGFTGEDVTANVRTIADIPTTLKAKTIPAACELRGEVYMLKHDFLALNKRQEEAGDTVFANPRNSAAGSLRQKDVAITASRPLKFFAYAWGEMSDYPMESPTQHAMLAWLGDAGFTVNPEITLCHSVDDALAFYRRIGEQRAALPYDIDGVVYKVDRLDYQARLGFVSRSPRWAIAHKFAAEQAVTVLEKIDIQVGRTGALTPVARLQPVTVGGVVVQNATLHNEDYIKGVGSDGSPLRDGVDIREGDTVVVQRAGDVIPQIVTVVLDKRPADLPAYKFPHKCPVCGSHAAREEGEAVWRCTGALICPAQAVERLKHFVSRLAFDIDGLGEKQIVLFHERGWVREPADIFTLKARNAELKLEDLEGYGETSVRNLFAAIDARRNIELNRLIFALGIRHVGEGNAKLLARHYGSIDVFLAAMRAAAEGQTPEGNTSEAYQDLDNIAGIGDVVAEAVVEFFAEPRNVGALDALLREIEVLPVEQAKQDTAVAGKTVVFTGALTKFTRDEAKAAAERLGAKVAGSVSKKTDYVVAGEDAGSKLTKARDLGVAVLTEDEWLALIG.

NAD(+) contacts are provided by residues 48-52 (DADYD), 97-98 (SL), and E129. The active-site N6-AMP-lysine intermediate is the K131. Residues R152, E189, K307, and K331 each contribute to the NAD(+) site. Positions 436, 439, 454, and 460 each coordinate Zn(2+). Residues 637-714 (KQDTAVAGKT…TEDEWLALIG (78 aa)) form the BRCT domain.

Belongs to the NAD-dependent DNA ligase family. LigA subfamily. Mg(2+) is required as a cofactor. Requires Mn(2+) as cofactor.

The enzyme catalyses NAD(+) + (deoxyribonucleotide)n-3'-hydroxyl + 5'-phospho-(deoxyribonucleotide)m = (deoxyribonucleotide)n+m + AMP + beta-nicotinamide D-nucleotide.. Functionally, DNA ligase that catalyzes the formation of phosphodiester linkages between 5'-phosphoryl and 3'-hydroxyl groups in double-stranded DNA using NAD as a coenzyme and as the energy source for the reaction. It is essential for DNA replication and repair of damaged DNA. This Rhodopseudomonas palustris (strain BisB5) protein is DNA ligase.